The primary structure comprises 425 residues: Stabilizer of axonemal microtubules 4 (425 aa).

Disordered stretches follow at residues 93-126 (PLEVPDGKHPLPWSMRQTSSGYGREKPSAGPPTK), 203-225 (EGSGFTKQSHQSPIVFQPPSQAL), and 316-335 (KEPTGFSLNNPMYVRSPCDP). The span at 207-222 (FTKQSHQSPIVFQPPS) shows a compositional bias: polar residues.

As to quaternary structure, microtubule inner protein component of sperm flagellar doublet microtubules. Interacts with PPP1CA.

The protein localises to the cell projection. The protein resides in the cilium. It localises to the cytoplasm. Its subcellular location is the cytoskeleton. It is found in the flagellum axoneme. This is Stabilizer of axonemal microtubules 4 from Homo sapiens (Human).